The following is a 203-amino-acid chain: MLKLRKVAITGGLSCGKSSVCRILKELGAYAVSADEIVHHLLSSDVNVSQKVVDLLGKSILKNNQIHRSLLAERVFQNYRLLTGLEKILHPAVYGEIEQQYQKQQDSKNQFPFFIAEVPLLYESDGAKFFDTIISVVADPEISLQRFKTHTHKSEKEFQSRMARQISPLEKAIRADYVVLNNGTLSELQQSLRELYQELKIYI.

Positions 6 to 203 (KVAITGGLSC…ELYQELKIYI (198 aa)) constitute a DPCK domain. ATP is bound at residue 14–19 (SCGKSS).

The protein belongs to the CoaE family.

The protein localises to the cytoplasm. The enzyme catalyses 3'-dephospho-CoA + ATP = ADP + CoA + H(+). It participates in cofactor biosynthesis; coenzyme A biosynthesis; CoA from (R)-pantothenate: step 5/5. Catalyzes the phosphorylation of the 3'-hydroxyl group of dephosphocoenzyme A to form coenzyme A. In Protochlamydia amoebophila (strain UWE25), this protein is Dephospho-CoA kinase.